A 628-amino-acid polypeptide reads, in one-letter code: Putative ankyrin repeat protein L769 (628 aa).

ANK repeat units follow at residues 217 to 246 (NYMD…EYDF), 333 to 362 (DLDE…DINR), 421 to 451 (TAEN…NHDL), and 512 to 542 (NNLK…DQDY).

The protein is Putative ankyrin repeat protein L769 of Acanthamoeba polyphaga mimivirus (APMV).